A 181-amino-acid chain; its full sequence is ATP synthase subunit delta (181 aa).

Belongs to the ATPase delta chain family. In terms of assembly, F-type ATPases have 2 components, F(1) - the catalytic core - and F(0) - the membrane proton channel. F(1) has five subunits: alpha(3), beta(3), gamma(1), delta(1), epsilon(1). F(0) has three main subunits: a(1), b(2) and c(10-14). The alpha and beta chains form an alternating ring which encloses part of the gamma chain. F(1) is attached to F(0) by a central stalk formed by the gamma and epsilon chains, while a peripheral stalk is formed by the delta and b chains.

It localises to the cell membrane. Functionally, f(1)F(0) ATP synthase produces ATP from ADP in the presence of a proton or sodium gradient. F-type ATPases consist of two structural domains, F(1) containing the extramembraneous catalytic core and F(0) containing the membrane proton channel, linked together by a central stalk and a peripheral stalk. During catalysis, ATP synthesis in the catalytic domain of F(1) is coupled via a rotary mechanism of the central stalk subunits to proton translocation. Its function is as follows. This protein is part of the stalk that links CF(0) to CF(1). It either transmits conformational changes from CF(0) to CF(1) or is implicated in proton conduction. This Shouchella clausii (strain KSM-K16) (Alkalihalobacillus clausii) protein is ATP synthase subunit delta.